Consider the following 471-residue polypeptide: MGMSVNSDPAALVPEITLLVSAVTGLLAGAWTPRERQGTIHVLAALATVVGLVATALAARQPDETVFGTYVLDTATHTTRAIVLVAVLALIALSRDTVAGHKRETEFVVLLQLGALGSIALAGAGDLIMLFAAFLLASVPFYALAGWAKQGRATEAALKYYLAGALAGVTTAAGVTILFGVAGATDYEKVADGISRGPAAAAAVGLIAVLAGLAFKAGAVPAHFWVPDIAEGTPPPVAAALTTVPKIGALVAFYRLLDTAIPAAAIDWRLITAVLATAGMTLGNLAAFAQTSALRMLGYSTVSQVGYLLMAVAVAGRTPLAQPALLLYLAAYALTNIAGFAVVATTHEHRIDRYRGLFHRDPLLALALTVALLGLVGTPPTAVFVGKLEIFTAAMDGGLAWLVVIAALNTLASLFYYLRWITPAFRPAEDDSAAVTPPSRWARAVALTTAALTLLLGIGSGIVLNALGASG.

The next 14 helical transmembrane spans lie at 11–31 (ALVPEITLLVSAVTGLLAGAW), 39–59 (TIHVLAALATVVGLVATALAA), 81–101 (AIVLVAVLALIALSRDTVAGH), 105–125 (TEFVVLLQLGALGSIALAGAG), 127–147 (LIMLFAAFLLASVPFYALAGW), 162–182 (LAGALAGVTTAAGVTILFGVA), 200–220 (AAAAVGLIAVLAGLAFKAGAV), 234–254 (PPPVAAALTTVPKIGALVAFY), 270–290 (LITAVLATAGMTLGNLAAFAQ), 296–316 (MLGYSTVSQVGYLLMAVAVAG), 324–344 (ALLLYLAAYALTNIAGFAVVA), 365–385 (ALALTVALLGLVGTPPTAVFV), 398–418 (GLAWLVVIAALNTLASLFYYL), and 444–464 (AVALTTAALTLLLGIGSGIVL).

Belongs to the complex I subunit 2 family. In terms of assembly, NDH-1 is composed of 14 different subunits. Subunits NuoA, H, J, K, L, M, N constitute the membrane sector of the complex.

It localises to the cell membrane. It carries out the reaction a quinone + NADH + 5 H(+)(in) = a quinol + NAD(+) + 4 H(+)(out). Functionally, NDH-1 shuttles electrons from NADH, via FMN and iron-sulfur (Fe-S) centers, to quinones in the respiratory chain. The immediate electron acceptor for the enzyme in this species is believed to be a menaquinone. Couples the redox reaction to proton translocation (for every two electrons transferred, four hydrogen ions are translocated across the cytoplasmic membrane), and thus conserves the redox energy in a proton gradient. This is NADH-quinone oxidoreductase subunit N 1 from Streptomyces griseus subsp. griseus (strain JCM 4626 / CBS 651.72 / NBRC 13350 / KCC S-0626 / ISP 5235).